The sequence spans 146 residues: Cell division protein SepF (146 aa).

The protein belongs to the SepF family. As to quaternary structure, homodimer. Interacts with FtsZ.

It localises to the cytoplasm. Its function is as follows. Cell division protein that is part of the divisome complex and is recruited early to the Z-ring. Probably stimulates Z-ring formation, perhaps through the cross-linking of FtsZ protofilaments. Its function overlaps with FtsA. The sequence is that of Cell division protein SepF from Alkaliphilus oremlandii (strain OhILAs) (Clostridium oremlandii (strain OhILAs)).